Reading from the N-terminus, the 246-residue chain is NAD-dependent protein deacetylase (246 aa).

Positions 1–246 constitute a Deacetylase sirtuin-type domain; that stretch reads MKKPDIQQLK…VIEEIVNSNS (246 aa). NAD(+)-binding residues include A25, F36, R37, Q106, I108, D109, and H124. F36 lines the nicotinamide pocket. I108 and D109 together coordinate nicotinamide. H124 acts as the Proton acceptor in catalysis. Zn(2+)-binding residues include C132, C135, C152, and C155. S193, S194, N216, and D233 together coordinate NAD(+).

Belongs to the sirtuin family. Class U subfamily. Requires Zn(2+) as cofactor.

The protein localises to the cytoplasm. The enzyme catalyses N(6)-acetyl-L-lysyl-[protein] + NAD(+) + H2O = 2''-O-acetyl-ADP-D-ribose + nicotinamide + L-lysyl-[protein]. Its function is as follows. NAD-dependent protein deacetylase which modulates the activities of several enzymes which are inactive in their acetylated form. This Staphylococcus epidermidis (strain ATCC 12228 / FDA PCI 1200) protein is NAD-dependent protein deacetylase.